Here is a 612-residue protein sequence, read N- to C-terminus: MCGIVGGVAERNIAEILIEGLKRLEYRGYDSAGVALINQQQILRERRVGKVANLAEAVAQSKISGSLGIAHTRWATHGKPTENNAHPHTSGSVAVVHNGIIENYQELKDDLEALGYVFTSQTDTEVVAHLINHAMTEQHNLLDAVREVVPELKGAYALGIIHTDYPDELITVREGSPLVIGVGIGENFISSDQLALLPVTNRFVYLEEGDIARLTRDSIEIYAHGVKIERPVKELDASVSNASKGEYKHYMLKEIYEQPEAIQQTISQALNGNALREDFLQFAEADFNQIQNVQIIACGTSYHAGMIAKYWFEQLIGVPCQVEIASEFRYRSPVIVANTLYICISQSGETADTLAALRDTQKRAKAKDIQISTLTICNVATSSMVRETDHHLLTLAGPEIGVASTKAFTTQLAALMLLILKIGQVKEQIAAEQIAEIASQLWHCPKVMLDTLQHNAEILRLSELFVEKQHCLFLGRGTHYPIALEGALKLKEISYIHAEGYAAGELKHGPLALVDNEMPVVILAPHDDMLDKLKSNMEEVQARGGELFVFADENSGVREKDRQHVVLIPEVNAWLAPIVYSIPVQLLSYHVAVLRGTDVDQPRNLAKSVTVE.

Cys2 serves as the catalytic Nucleophile; for GATase activity. The region spanning 2-217 (CGIVGGVAER…EGDIARLTRD (216 aa)) is the Glutamine amidotransferase type-2 domain. 2 SIS domains span residues 283 to 428 (AEAD…VKEQ) and 461 to 602 (LSEL…VDQP). The active-site For Fru-6P isomerization activity is the Lys607.

As to quaternary structure, homodimer.

It is found in the cytoplasm. It carries out the reaction D-fructose 6-phosphate + L-glutamine = D-glucosamine 6-phosphate + L-glutamate. Its function is as follows. Catalyzes the first step in hexosamine metabolism, converting fructose-6P into glucosamine-6P using glutamine as a nitrogen source. This chain is Glutamine--fructose-6-phosphate aminotransferase [isomerizing], found in Acinetobacter baylyi (strain ATCC 33305 / BD413 / ADP1).